We begin with the raw amino-acid sequence, 236 residues long: Ribonuclease 3 (236 aa).

An RNase III domain is found at 7 to 136 (KSYILKKFNI…FIGALYLDQG (130 aa)). Glu49 contacts Mg(2+). Asp53 is an active-site residue. Mg(2+) contacts are provided by Asp122 and Glu125. Glu125 is a catalytic residue. Residues 162-232 (DFKSRLQERL…ARAALKILED (71 aa)) form the DRBM domain.

Belongs to the ribonuclease III family. In terms of assembly, homodimer. It depends on Mg(2+) as a cofactor.

It is found in the cytoplasm. The enzyme catalyses Endonucleolytic cleavage to 5'-phosphomonoester.. In terms of biological role, digests double-stranded RNA. Involved in the processing of primary rRNA transcript to yield the immediate precursors to the large and small rRNAs (23S and 16S). Processes some mRNAs, and tRNAs when they are encoded in the rRNA operon. Processes pre-crRNA and tracrRNA of type II CRISPR loci if present in the organism. This chain is Ribonuclease 3, found in Leuconostoc mesenteroides subsp. mesenteroides (strain ATCC 8293 / DSM 20343 / BCRC 11652 / CCM 1803 / JCM 6124 / NCDO 523 / NBRC 100496 / NCIMB 8023 / NCTC 12954 / NRRL B-1118 / 37Y).